The primary structure comprises 592 residues: MIRTHEAGTLRPADAGSRVVLAGWVARRRDLGGVVFLDLRDASGIVQVVAREGVAGQVASRVRAEFCLRVAGEVRLRPAGNENPELETGDVEVVADEIEVLSEAAPLPFPVTGPVEVNEETRLKYRYLDLRRPGPARALRLRSEMNRLAREVMARHRFVEVETPYLTRSTPEGARDFLVPARLQPGHWYALPQSPQLFKQLLMVAGLERYYQLARCFRDEDFRADRQPEFTQLDIEMSFVTEDDVMALAEDVIATLWSQLAGVELALPLPRLTYAEAMRRFGSDKPDLRFGQEIVDLTKFFAGTSLRIFQAPYVGAVVMPGGAGQSRSELDEWTTFARSRGAKGLAYVLVGAELTGPIAKNLSDAERAGLPAATGARPGDAIFFAAGEQRASQELLGAVRLEIARRCRLTDPASGAPAWSLCWIVDPPLFEPDGAGGWTSVHHPFTAPKPEWMDRFADKPGEALAAAYDIVANGNEIGGGSIRIHRADVQQRVFEVLGISEAEANAKFGFLLEAFRYGPPPHGGIAFGWDRIAALLAGVESIRDVIAFPKTASGTDPLTGAPTPITPEQRKEAGIDADPYAAAGRPPGRQSA.

Residue E172 coordinates L-aspartate. Positions Q196–K199 are aspartate. An L-aspartate-binding site is contributed by R218. Residues R218 to E220 and Q227 each bind ATP. H442 contacts L-aspartate. E476 serves as a coordination point for ATP. Residue R483 coordinates L-aspartate. G528–R531 provides a ligand contact to ATP. The disordered stretch occupies residues S553–A592.

Belongs to the class-II aminoacyl-tRNA synthetase family. Type 1 subfamily. As to quaternary structure, homodimer.

It localises to the cytoplasm. The catalysed reaction is tRNA(Asx) + L-aspartate + ATP = L-aspartyl-tRNA(Asx) + AMP + diphosphate. Aspartyl-tRNA synthetase with relaxed tRNA specificity since it is able to aspartylate not only its cognate tRNA(Asp) but also tRNA(Asn). Reaction proceeds in two steps: L-aspartate is first activated by ATP to form Asp-AMP and then transferred to the acceptor end of tRNA(Asp/Asn). The protein is Aspartate--tRNA(Asp/Asn) ligase of Acidothermus cellulolyticus (strain ATCC 43068 / DSM 8971 / 11B).